We begin with the raw amino-acid sequence, 214 residues long: Cdc42 effector protein 2 (214 aa).

Position 2 is an N-acetylserine (serine 2). Residues 30-44 form the CRIB domain; sequence ISPPLGDFRHTIHIG. A phosphoserine mark is found at serine 31, serine 101, serine 137, serine 141, and serine 145. The segment at 119-177 is disordered; it reads LTLPTAQAPPKPPRLHLESPQPSPQPSPQGAGNVDVWRIPEAGSPHNGMSPEPEAEEPF.

Belongs to the BORG/CEP family. In terms of assembly, interacts with CDC42 and RHOQ in a GTP-dependent manner, and with SEPT7.

It localises to the endomembrane system. The protein localises to the cytoplasm. It is found in the cytoskeleton. Probably involved in the organization of the actin cytoskeleton. May act downstream of CDC42 to induce actin filament assembly leading to cell shape changes. Induces pseudopodia formation in fibroblasts in a CDC42-dependent manner. The chain is Cdc42 effector protein 2 (Cdc42ep2) from Mus musculus (Mouse).